The chain runs to 360 residues: MSQSAVSFQISPVSKAQDPLIQQKIDLKTKPPGALGQLESLALQIARVQATDSQQADQPQNTVLKIVHPTMLVFAGDHGIVAEGVSIAPSEVTRQMVQNFAHGGAAINVFCRQVGFKLEVIDCGILTPVEGVEGIIDQRLGAGTGAIHLEPAMALETVDKGFAMARDLIERHHQAGCNLVAFGEMGIGNTSAAAAIMAAIMQLDVIDCVGRGTGINSETLERKLMLIELALLLHQSALTGPKSVLACLGGFEIVQMTGAMLAAAERKMLVVVDGFIATAAALVAVQIAPNVRDYLIFAHQSDEQGHQRMLEFLQAKPLLSLGLRLGEGTGAALALPLIQASVNFYNQMASFSDAGIEAVV.

The Proton acceptor role is filled by Glu-327.

It belongs to the CobT family.

It carries out the reaction 5,6-dimethylbenzimidazole + nicotinate beta-D-ribonucleotide = alpha-ribazole 5'-phosphate + nicotinate + H(+). The protein operates within nucleoside biosynthesis; alpha-ribazole biosynthesis; alpha-ribazole from 5,6-dimethylbenzimidazole: step 1/2. Catalyzes the synthesis of alpha-ribazole-5'-phosphate from nicotinate mononucleotide (NAMN) and 5,6-dimethylbenzimidazole (DMB). The chain is Nicotinate-nucleotide--dimethylbenzimidazole phosphoribosyltransferase from Shewanella baltica (strain OS185).